Consider the following 753-residue polypeptide: LIM domain and actin-binding protein 1 (753 aa).

Met-1 carries the post-translational modification N-acetylmethionine. Residue Ser-15 is modified to Phosphoserine. Basic and acidic residues predominate over residues 46-56 (EEANMERKKNN). Disordered stretches follow at residues 46–66 (EEAN…HFRR) and 82–186 (GAEF…TSGK). A Phosphoserine modification is found at Ser-132. Positions 143–152 (PRSENSHDFK) are enriched in basic and acidic residues. A Required for interaction with NPC1L1 motif is present at residues 164–166 (CLG). A compositionally biased stretch (basic and acidic residues) spans 167 to 177 (DSRHEAEKPET). Phosphoserine is present on residues Ser-225, Ser-230, Ser-242, and Ser-263. 2 disordered regions span residues 276 to 326 (AAVS…VSTT) and 341 to 379 (TCNS…TAKK). Residues 278–291 (VSKQSSPASYTNEL) show a composition bias toward polar residues. Over residues 292 to 305 (KTSESKTHKWEQKE) the composition is skewed to basic and acidic residues. The span at 342-351 (CNSQVKSEAQ) shows a compositional bias: polar residues. Phosphoserine occurs at positions 348, 360, 367, and 372. The span at 363-375 (ARTSSLPESSPSK) shows a compositional bias: polar residues. In terms of domain architecture, LIM zinc-binding spans 386-446 (ESCVECQKTV…KPHFNQLFKS (61 aa)). Position 437 is an N6-succinyllysine (Lys-437). Residues Ser-467, Ser-485, and Ser-488 each carry the phosphoserine modification. Disordered stretches follow at residues 467 to 493 (SDNE…GVED), 505 to 669 (SMEA…FELE), and 682 to 703 (EDDN…GWSG). The tract at residues 491 to 511 (VEDAPIAKVGVLAASMEAKAS) is required for interaction with MYO5B. 2 stretches are compositionally biased toward basic and acidic residues: residues 512–525 (SQRE…ETKK) and 554–565 (WPPEDDVCKTEA). The segment covering 598-609 (SSIKSPKASSPS) has biased composition (low complexity). Residues Ser-599, Ser-602, Ser-607, and Ser-615 each carry the phosphoserine modification. Over residues 630-666 (MERKQTENARPSGEKENVGKSRWQGEEVPRSKDRSSF) the composition is skewed to basic and acidic residues. Phosphoserine is present on residues Ser-692, Ser-720, and Ser-735.

Interacts with NPC1L1; bridges NPC1L1 with MYO5B. Interacts with MYO5B; bridges MYO5B with NPC1L1. Interacts with PXN; this complex stabilizes actin dynamics. Binds to G-actin and F-actin. Interacts with LUZP1 (via C-terminus); both proteins restrict ciliation and may work together to regulate this process. Binds RAB40B (GTP-bound); interaction influences LIMA1 subcellular localization in lamellipodia during cell migration. In terms of processing, phosphorylation of the C-terminal region by MAPK1/MAPK3 reduces its association with F-actin and contributes to actin filament reorganization and enhances cell motility. Post-translationally, ubiquitinated by the ECS(RAB40B) complex leading to its degradation. In terms of tissue distribution, highly expressed in the small intestine, including the duodenum, jejunum, and ileum. Low expression in the liver and very low expressed in the heart, spleen, lung, brain, and pancreas. Isoform Alpha is highly expressed in embryos from day 7-11 and in adult spleen and lung. Isoform Beta expression is highest in adult kidney, testis, lung and liver, intermediate in heart, brain, spleen, skeletal muscle and low in embryos.

The protein localises to the cytoplasm. It is found in the cell junction. It localises to the focal adhesion. The protein resides in the cytoskeleton. Its subcellular location is the stress fiber. The protein localises to the cell membrane. It is found in the cell projection. It localises to the ruffle. The protein resides in the lamellipodium. Actin-binding protein involved in actin cytoskeleton regulation and dynamics. Increases the number and size of actin stress fibers and inhibits membrane ruffling. Inhibits actin filament depolymerization. Bundles actin filaments, delays filament nucleation and reduces formation of branched filaments. Acts as a negative regulator of primary cilium formation. Plays a role in cholesterol homeostasis. Influences plasma cholesterol levels through regulation of intestinal cholesterol absorption. May act as a scaffold protein by regulating NPC1L1 transportation, an essential protein for cholesterol absorption, to the plasma membrane by recruiting MYO5B to NPC1L1, and thus facilitates cholesterol uptake. In Mus musculus (Mouse), this protein is LIM domain and actin-binding protein 1 (Lima1).